A 214-amino-acid chain; its full sequence is MDAQLLQANKRLLRRAANVRQRYKMLATESFVADIKQILLRFIQKPNVIIMYISVLVLFAAHIDSNTHDILDDLAAQFPNNTFIEWAKSNFFRICGALVFIPVIIDTEEKHRNYLALVIFVFLMGFPQRSIMEYFIYSISFHVYAKAKHPVTRIFIIGAAVFSCVMFGIFTNEQLRKLYAELPKVPTHPVAVNRVEKVANRASRVSTEGTVNFG.

4 helical membrane-spanning segments follow: residues 43-63 (IQKPNVIIMYISVLVLFAAHI), 84-104 (IEWAKSNFFRICGALVFIPVI), 116-136 (ALVIFVFLMGFPQRSIMEYFI), and 150-170 (PVTRIFIIGAAVFSCVMFGIF).

The protein resides in the host membrane. This is an uncharacterized protein from Citrus leprosis virus C (isolate Citrus sinesis/Brazil/Cordeiropolis/2003) (CiLV-C).